Consider the following 324-residue polypeptide: MIALGIEGTAHTLGIGIVTEDKVLANVFNTLTTEKGGIHPKEAAEHHAKLLRPLLKKALQEAKVNIKDVDVIAFSQGPGLGPALRVVATAARALALRYNKPIVGVNHCIAHVEVTKMFGIKDPVGLYVSGGNTQILALEGGRYRVFGETLDIGIGNAIDTFAREIGLGFPGGPKIEKLAQRGEKYIELPYTVKGMDLSFSGILTEAVRKYKTGKYKLEDIAYSFQETAFAALIEVTERAVAHTGKEEVVLVGGVAANNRLREMLKTMSEERSIKFFVPPYDLCRDNGAMIAYNGLRMFKAGIRFNIEETIVKQKFRTDEMEVTW.

Positions 107, 111, and 127 each coordinate Fe cation. Residues 127–131 (YVSGG), Asp159, Gly172, Glu176, and Asn257 each bind substrate. Fe cation is bound at residue Asp285.

This sequence belongs to the KAE1 / TsaD family. In terms of assembly, monomer. Component of the KEOPS complex that consists of Kae1, Bud32, Cgi121 and Pcc1; the whole complex dimerizes. The cofactor is Fe(2+).

The protein localises to the cytoplasm. The catalysed reaction is L-threonylcarbamoyladenylate + adenosine(37) in tRNA = N(6)-L-threonylcarbamoyladenosine(37) in tRNA + AMP + H(+). Functionally, required for the formation of a threonylcarbamoyl group on adenosine at position 37 (t(6)A37) in tRNAs that read codons beginning with adenine. Is a component of the KEOPS complex that is probably involved in the transfer of the threonylcarbamoyl moiety of threonylcarbamoyl-AMP (TC-AMP) to the N6 group of A37. Kae1 likely plays a direct catalytic role in this reaction, but requires other protein(s) of the complex to fulfill this activity. The protein is tRNA N6-adenosine threonylcarbamoyltransferase of Thermococcus sibiricus (strain DSM 12597 / MM 739).